Reading from the N-terminus, the 883-residue chain is Brevican core protein (883 aa).

Positions 1-22 (MIPLLLSLLAALVLTQAPAALA) are cleaved as a signal peptide. An Ig-like V-type domain is found at 35-154 (FRVRIGATQL…SSDAVEVKVK (120 aa)). Cystine bridges form between Cys-56/Cys-136, Cys-178/Cys-249, Cys-202/Cys-223, Cys-276/Cys-351, and Cys-300/Cys-321. Asn-129 carries an N-linked (GlcNAc...) asparagine glycan. 2 consecutive Link domains span residues 156-251 (VVFL…YCYA) and 256-353 (GELF…YCFR). Phosphoserine is present on Ser-224. An N-linked (GlcNAc...) asparagine glycan is attached at Asn-336. A disordered region spans residues 402–592 (SIPISEDGGG…LETPSEEKSG (191 aa)). Ser-413 bears the Phosphoserine mark. A glycan (O-linked (Xyl...) (chondroitin sulfate) serine) is linked at Ser-413. Acidic residues-rich tracts occupy residues 440 to 451 (SSEEEGVALEEE) and 459 to 468 (ALEEEKEQED). A compositionally biased stretch (polar residues) spans 479 to 495 (PLPTGSETEHSLSQVSP). Positions 581 to 592 (RELETPSEEKSG) are enriched in basic and acidic residues. Residues 622 to 658 (SSGDCIPSPCHNGGTCLEEKEGFRCLCLPGYGGDLCD) enclose the EGF-like domain. 8 disulfides stabilise this stretch: Cys-626–Cys-637, Cys-631–Cys-646, Cys-648–Cys-657, Cys-664–Cys-675, Cys-692–Cys-784, Cys-760–Cys-776, Cys-791–Cys-834, and Cys-820–Cys-847. The region spanning 658-786 (DVGLHFCSPG…NYHLSYTCKM (129 aa)) is the C-type lectin domain. Residues 789–849 (VSCGPPPQLP…WEAPQISCVP (61 aa)) form the Sushi domain. The segment at 854–883 (RALRSMDAPEGPRGQLSRHRKAPLTPPSSL) is disordered.

This sequence belongs to the aggrecan/versican proteoglycan family. In terms of assembly, interacts with TNR. In terms of processing, O-glycosylated; contains chondroitin sulfate. In terms of tissue distribution, expressed in the retina, specifically around the inner and outer segments of photoreceptors, retinal pigment epithelium, outer plexiform layer, and the ganglion cell layer (at protein level). Brain. Expressed in the brainstem and cerebellum in a perineuronal net pattern.

The protein resides in the secreted. The protein localises to the extracellular space. Its subcellular location is the extracellular matrix. Its function is as follows. May play a role in the terminally differentiating and the adult nervous system during postnatal development. Could stabilize interactions between hyaluronan (HA) and brain proteoglycans. The chain is Brevican core protein (Bcan) from Mus musculus (Mouse).